Consider the following 349-residue polypeptide: Ferredoxin--NADP reductase (349 aa).

Residues Asp-35, Gln-43, Tyr-48, Val-88, Phe-123, Asp-288, and Thr-329 each coordinate FAD.

Belongs to the ferredoxin--NADP reductase type 2 family. As to quaternary structure, homodimer. The cofactor is FAD.

It catalyses the reaction 2 reduced [2Fe-2S]-[ferredoxin] + NADP(+) + H(+) = 2 oxidized [2Fe-2S]-[ferredoxin] + NADPH. The sequence is that of Ferredoxin--NADP reductase from Colwellia psychrerythraea (strain 34H / ATCC BAA-681) (Vibrio psychroerythus).